Consider the following 407-residue polypeptide: uncharacterized protein (407 aa).

Transmembrane regions (helical) follow at residues 22 to 42 (IVSVVSFTFICYLTIGLPLAV), 51 to 71 (LGFSAIVAGAAISVQYFATLA), 101 to 121 (ALLLSAFAFARWPAASIVLLV), 126 to 146 (VLGIGESLVGTGAILWGIGRV), 154 to 174 (VISWNGIATYGALAIGAPVGV), 179 to 199 (ALIPAVLGMLVIALAALGYYL), 227 to 247 (GLGLALGSAGFGSIATFITLY), 258 to 278 (LSLTVFGTLFIGARLLFANTI), 286 to 306 (VAIVSFAFECAGLLMLWLAPV), 309 to 329 (VALVGAALTGFGFALIFPALG), 347 to 367 (AYSVFLDLSLGITGPLAGYVA), and 369 to 389 (AFGYPQVFLCAAVAAAAGVAL).

Belongs to the major facilitator superfamily. YhhS family.

The protein resides in the cell inner membrane. This is an uncharacterized protein from Burkholderia pseudomallei (strain 1106a).